The sequence spans 251 residues: Imidazole glycerol phosphate synthase subunit HisF (251 aa).

Active-site residues include aspartate 11 and aspartate 130.

This sequence belongs to the HisA/HisF family. Heterodimer of HisH and HisF.

It is found in the cytoplasm. It carries out the reaction 5-[(5-phospho-1-deoxy-D-ribulos-1-ylimino)methylamino]-1-(5-phospho-beta-D-ribosyl)imidazole-4-carboxamide + L-glutamine = D-erythro-1-(imidazol-4-yl)glycerol 3-phosphate + 5-amino-1-(5-phospho-beta-D-ribosyl)imidazole-4-carboxamide + L-glutamate + H(+). It participates in amino-acid biosynthesis; L-histidine biosynthesis; L-histidine from 5-phospho-alpha-D-ribose 1-diphosphate: step 5/9. In terms of biological role, IGPS catalyzes the conversion of PRFAR and glutamine to IGP, AICAR and glutamate. The HisF subunit catalyzes the cyclization activity that produces IGP and AICAR from PRFAR using the ammonia provided by the HisH subunit. In Streptococcus mutans serotype c (strain ATCC 700610 / UA159), this protein is Imidazole glycerol phosphate synthase subunit HisF.